Reading from the N-terminus, the 377-residue chain is Actin depolymerising venom protein gelsolin 1 (377 aa).

An N-terminal signal peptide occupies residues 1–26 (MFRQMKLGSLATKLLLACFLVTCTSG). Gelsolin-like repeat units follow at residues 50–133 (FVPV…SEQF), 174–243 (IRVR…SSTS), and 298–368 (EKPL…PTAF).

Expressed by the venom gland (posterior main gland) (at protein level).

The protein resides in the secreted. In Platymeris rhadamanthus (Red spot assassin bug), this protein is Actin depolymerising venom protein gelsolin 1.